The following is a 150-amino-acid chain: MVHATSPLLLLLLLSLALVAPSLSARKCSLTGEWDNDLGSIMTIGAVNDNGEFDGTYITAVADNPGNITLSPLLGIQHKRASQPTFGFTVHWNFSESTSVFVGQCFVDRSGKEVLKTKWLQRLAVDDISDDWIATRVGNNDFTRQHTVEE.

The signal sequence occupies residues 1–24 (MVHATSPLLLLLLLSLALVAPSLS). The region spanning 26–147 (RKCSLTGEWD…GNNDFTRQHT (122 aa)) is the Avidin-like domain. A disulfide bridge links Cys-28 with Cys-105. Asn-36, Ser-40, Tyr-57, Thr-59, and Asp-63 together coordinate biotin. 2 N-linked (GlcNAc...) asparagine glycosylation sites follow: Asn-67 and Asn-93. Positions 95, 99, and 140 each coordinate biotin.

In terms of assembly, homotetramer. In terms of processing, glycosylated.

Its subcellular location is the secreted. Its function is as follows. Forms a strong non-covalent specific complex with biotin. The sequence is that of Avidin-related protein 2 (AVR2) from Gallus gallus (Chicken).